The following is a 293-amino-acid chain: Cytochrome c biogenesis protein CcsA (293 aa).

Helical transmembrane passes span 12–32 (INILAFLGALVSSLFYWAKLT), 39–59 (VFSLPKFCLIFSNCIIAGMLL), 78–98 (LFLSWVLNIITIIFVDKLSII), 99–119 (GAIGSSAVTLIIGYANYILPP), 142–162 (VMIFSYGLLIMGAFLSLIYVI), 216–236 (FISLGFISLTLGIISGSVWAN), 250–267 (TWALITWLVFATYLHIRI), and 273–293 (KIYASLVASLGLIVICFVTWE).

It belongs to the CcmF/CycK/Ccl1/NrfE/CcsA family. As to quaternary structure, may interact with Ccs1.

The protein localises to the plastid. The protein resides in the chloroplast thylakoid membrane. In terms of biological role, required during biogenesis of c-type cytochromes (cytochrome c6 and cytochrome f) at the step of heme attachment. The sequence is that of Cytochrome c biogenesis protein CcsA from Cyanidium caldarium (Red alga).